The following is a 316-amino-acid chain: Acetaldehyde dehydrogenase 3 (316 aa).

12–15 provides a ligand contact to NAD(+); it reads SGNI. Residue Cys-132 is the Acyl-thioester intermediate of the active site. NAD(+) contacts are provided by residues 163–171 and Asn-289; that span reads SAGPGTRAN.

The protein belongs to the acetaldehyde dehydrogenase family.

The catalysed reaction is acetaldehyde + NAD(+) + CoA = acetyl-CoA + NADH + H(+). The chain is Acetaldehyde dehydrogenase 3 (mhpF) from Comamonas testosteroni (Pseudomonas testosteroni).